The primary structure comprises 104 residues: MIPALFLAAALGGMLRFLLSKIGPYVGTFIANMAACVVLAAVRDASPLVMAAVGTGFAGALSTWSTLAKELGTLIRQRRWAMLLGYTTATILGGMVAVWCGLQI.

A run of 3 helical transmembrane segments spans residues 22–42 (IGPYVGTFIANMAACVVLAAV), 48–68 (LVMAAVGTGFAGALSTWSTLA), and 82–102 (MLLGYTTATILGGMVAVWCGL). The Na(+) site is built by Gly-59 and Ser-62.

This sequence belongs to the fluoride channel Fluc/FEX (TC 1.A.43) family.

It localises to the cell membrane. The catalysed reaction is fluoride(in) = fluoride(out). With respect to regulation, na(+) is not transported, but it plays an essential structural role and its presence is essential for fluoride channel function. Its function is as follows. Fluoride-specific ion channel. Important for reducing fluoride concentration in the cell, thus reducing its toxicity. The sequence is that of Fluoride-specific ion channel FluC 2 from Corynebacterium diphtheriae (strain ATCC 700971 / NCTC 13129 / Biotype gravis).